Here is a 243-residue protein sequence, read N- to C-terminus: MPEDAAVAGGEAGALVLFSGGQDSATCLAWALDRFPHVETLGFDYGQRHWVELDRRAALRQGLTALDPAWGRRLGPDHTLALAALGEISDTALTRDSAIAFARDGLPNTFVPGRNLAFLTFAAALAYRRGLRHIVGGMCETDYSGYPDCRDDTIKALQVALNLGMERRFVLHTPLMWIDKAQTWALAETLGGRALVELVVEESHTCYLGERGARHEWGYGCGTCPACDLRAKGFSRYLAARAD.

18–28 (FSGGQDSATCL) lines the ATP pocket. Positions 206, 221, 224, and 227 each coordinate Zn(2+).

Belongs to the QueC family. Requires Zn(2+) as cofactor.

The catalysed reaction is 7-carboxy-7-deazaguanine + NH4(+) + ATP = 7-cyano-7-deazaguanine + ADP + phosphate + H2O + H(+). It functions in the pathway purine metabolism; 7-cyano-7-deazaguanine biosynthesis. Catalyzes the ATP-dependent conversion of 7-carboxy-7-deazaguanine (CDG) to 7-cyano-7-deazaguanine (preQ(0)). This chain is 7-cyano-7-deazaguanine synthase, found in Methylorubrum extorquens (strain CM4 / NCIMB 13688) (Methylobacterium extorquens).